A 399-amino-acid polypeptide reads, in one-letter code: Aromatic-amino-acid aminotransferase (399 aa).

Substrate contacts are provided by Gly-36, Tyr-67, Trp-132, and Asn-184. Lys-247 is subject to N6-(pyridoxal phosphate)lysine. Substrate is bound at residue Arg-375.

This sequence belongs to the class-I pyridoxal-phosphate-dependent aminotransferase family. Homodimer. The cofactor is pyridoxal 5'-phosphate.

The protein resides in the cytoplasm. It catalyses the reaction an aromatic L-alpha-amino acid + 2-oxoglutarate = an aromatic oxo-acid + L-glutamate. In Pseudomonas aeruginosa (strain ATCC 15692 / DSM 22644 / CIP 104116 / JCM 14847 / LMG 12228 / 1C / PRS 101 / PAO1), this protein is Aromatic-amino-acid aminotransferase (phhC).